A 288-amino-acid chain; its full sequence is Acidic endochitinase SP2 (288 aa).

An N-terminal signal peptide occupies residues 1–27 (MTLLLKNTLYLALIISVISSFPTSLFA). Pyrrolidone carboxylic acid is present on glutamine 28. The Chitin-binding type-1 domain occupies 28–63 (QNCGCAPNLCCSNFGFCGTGTPYCGVGNCQSGPCEG). Disulfide bonds link cysteine 30/cysteine 38, cysteine 32/cysteine 44, cysteine 37/cysteine 51, and cysteine 56/cysteine 61. A compositionally biased stretch (low complexity) spans 64–78 (GTPTTPTTPTTPTTP). A disordered region spans residues 64–84 (GTPTTPTTPTTPTTPGTGGGG). A hinge region (Gly/Pro/Thr-rich) region spans residues 64–85 (GTPTTPTTPTTPTTPGTGGGGS). 4 positions are modified to 4-hydroxyproline: proline 66, proline 69, proline 72, and proline 75. 4 consecutive repeat copies span residues 67 to 69 (TTP), 70 to 72 (TTP), 73 to 75 (TTP), and 76 to 78 (TTP). The 4 X 3 AA tandem repeats of T-T-P stretch occupies residues 67–78 (TTPTTPTTPTTP). The interval 86–288 (SVSDIVSQAF…GVAPGDNLTC (203 aa)) is catalytic. Cystine bridges form between cysteine 107/cysteine 154, cysteine 168/cysteine 178, and cysteine 256/cysteine 288. Glutamate 149 functions as the Proton donor in the catalytic mechanism.

This sequence belongs to the glycosyl hydrolase 19 family. Chitinase class I subfamily. Post-translationally, O-glycosylated on hydroxyprolines; contains xylose. In terms of tissue distribution, localized to infected area.

It localises to the secreted. It is found in the extracellular space. It catalyses the reaction Random endo-hydrolysis of N-acetyl-beta-D-glucosaminide (1-&gt;4)-beta-linkages in chitin and chitodextrins.. In terms of biological role, defense against chitin-containing fungal pathogens. This chain is Acidic endochitinase SP2 (SP2), found in Beta vulgaris (Sugar beet).